Reading from the N-terminus, the 1167-residue chain is Pesticidal crystal protein Cry21Aa (1167 aa).

Belongs to the delta endotoxin family.

Its function is as follows. Endotoxin with nematicidal activity. The sequence is that of Pesticidal crystal protein Cry21Aa (cry21Aa) from Bacillus thuringiensis.